The chain runs to 34 residues: Toxin Ptu1 (34 aa).

3 cysteine pairs are disulfide-bonded: C5–C20, C12–C26, and C19–C33.

Its subcellular location is the secreted. In terms of biological role, binds reversibly and blocks N-type voltage-gated calcium channels (Cav). This chain is Toxin Ptu1, found in Peirates turpis (Assassin bug).